A 390-amino-acid polypeptide reads, in one-letter code: MAEIHNGGELCDFMENGEIFSEHSCLNAHMGTENTGDTYDCDEYGENFPMLHNSAPAGETLSVLNQCRKAFSLPPNVHQRTWIGDKSFEYSDCEEAFVDQSHLQANRITHNGETLYEQKQCGRAFTYSTSHAVSVKMHTVEKPYECKECGKFFRYSSYLNSHMRTHTGEKPYECKECGKCFTVSSHLVEHVRIHTGEKPYQCKECGRAFAGRSGLTKHVRIHTGEKPYECNECGKAYNRFYLLTEHFKTHTEEKPFECKVCGKSFRSSSCLKNHFRIHTGIKPYKCKECGKAFTVSSSLHNHVKIHTGEKPYECKDCGKAFATSSQLIEHIRTHTGEKPYICKECGKTFRASSHLQKHVRIHTGEKPYICNECGKAYNRFYLLTKHLKTH.

The C2H2-type 1; degenerate zinc-finger motif lies at 88-110 (FEYSDCEEAFVDQSHLQANRITH). The C2H2-type 2; degenerate zinc finger occupies 116 to 138 (YEQKQCGRAFTYSTSHAVSVKMH). 9 consecutive C2H2-type zinc fingers follow at residues 144–166 (YECK…MRTH), 172–194 (YECK…VRIH), 200–222 (YQCK…VRIH), 228–250 (YECN…FKTH), 256–278 (FECK…FRIH), 284–306 (YKCK…VKIH), 312–334 (YECK…IRTH), 340–362 (YICK…VRIH), and 368–390 (YICN…LKTH).

This sequence belongs to the krueppel C2H2-type zinc-finger protein family.

The protein resides in the nucleus. May be involved in transcriptional regulation. This is Zinc finger protein 121 (ZNF121) from Homo sapiens (Human).